The primary structure comprises 336 residues: NADH-quinone oxidoreductase subunit H (336 aa).

Helical transmembrane passes span 9–29, 77–97, 116–136, 156–176, 188–208, 236–256, 275–295, and 315–335; these read LVWI…LTYA, FLFA…VIPF, LGVM…IIAG, ISYE…TGSL, LPYW…VSIL, IPFA…SSIM, IVPG…CFLI, and VFLP…AFNI.

This sequence belongs to the complex I subunit 1 family. NDH-1 is composed of 14 different subunits. Subunits NuoA, H, J, K, L, M, N constitute the membrane sector of the complex.

The protein resides in the cell inner membrane. The enzyme catalyses a quinone + NADH + 5 H(+)(in) = a quinol + NAD(+) + 4 H(+)(out). Its function is as follows. NDH-1 shuttles electrons from NADH, via FMN and iron-sulfur (Fe-S) centers, to quinones in the respiratory chain. The immediate electron acceptor for the enzyme in this species is believed to be ubiquinone. Couples the redox reaction to proton translocation (for every two electrons transferred, four hydrogen ions are translocated across the cytoplasmic membrane), and thus conserves the redox energy in a proton gradient. This subunit may bind ubiquinone. This is NADH-quinone oxidoreductase subunit H from Neorickettsia sennetsu (strain ATCC VR-367 / Miyayama) (Ehrlichia sennetsu).